Here is a 311-residue protein sequence, read N- to C-terminus: tRNA-cytidine(32) 2-sulfurtransferase (311 aa).

Positions 47 to 52 (SGGKDS) match the PP-loop motif motif. 3 residues coordinate [4Fe-4S] cluster: C122, C125, and C213.

It belongs to the TtcA family. In terms of assembly, homodimer. Mg(2+) is required as a cofactor. Requires [4Fe-4S] cluster as cofactor.

The protein resides in the cytoplasm. It catalyses the reaction cytidine(32) in tRNA + S-sulfanyl-L-cysteinyl-[cysteine desulfurase] + AH2 + ATP = 2-thiocytidine(32) in tRNA + L-cysteinyl-[cysteine desulfurase] + A + AMP + diphosphate + H(+). Its pathway is tRNA modification. Functionally, catalyzes the ATP-dependent 2-thiolation of cytidine in position 32 of tRNA, to form 2-thiocytidine (s(2)C32). The sulfur atoms are provided by the cysteine/cysteine desulfurase (IscS) system. The sequence is that of tRNA-cytidine(32) 2-sulfurtransferase from Klebsiella pneumoniae subsp. pneumoniae (strain ATCC 700721 / MGH 78578).